The following is an 801-amino-acid chain: Phenylalanine--tRNA ligase beta subunit (801 aa).

Residues 39 to 153 enclose the tRNA-binding domain; the sequence is AEGLSKLVVG…EGAIPGDSIF (115 aa). The B5 domain maps to 406-481; that stretch reads TEPVEVSTTL…RIYGYEKLPT (76 aa). 4 residues coordinate Mg(2+): D459, D465, E468, and E469. The region spanning 708–801 is the FDX-ACB domain; the sequence is TKYPSVSRDI…LVEKVNAEIR (94 aa).

It belongs to the phenylalanyl-tRNA synthetase beta subunit family. Type 1 subfamily. In terms of assembly, tetramer of two alpha and two beta subunits. The cofactor is Mg(2+).

It is found in the cytoplasm. It catalyses the reaction tRNA(Phe) + L-phenylalanine + ATP = L-phenylalanyl-tRNA(Phe) + AMP + diphosphate + H(+). The sequence is that of Phenylalanine--tRNA ligase beta subunit from Streptococcus agalactiae serotype Ia (strain ATCC 27591 / A909 / CDC SS700).